Reading from the N-terminus, the 367-residue chain is Uracil nucleotide/cysteinyl leukotriene receptor (367 aa).

The disordered stretch occupies residues 1-28 (MSKRSWWAGSRKPPREMLKLSGSDSSQS). At 1–64 (MSKRSWWAGS…TPLENMLFAS (64 aa)) the chain is on the extracellular side. N-linked (GlcNAc...) asparagine glycosylation occurs at Asn42. A helical membrane pass occupies residues 65-85 (FYLLDFILALVGNTLALWLFI). Residues 86–92 (RDHKSGT) lie on the Cytoplasmic side of the membrane. A helical transmembrane segment spans residues 93 to 113 (PANVFLMHLAVADLSCVLVLP). At 114–133 (TRLVYHFSGNHWPFGEIACR) the chain is on the extracellular side. Cys132 and Cys209 form a disulfide bridge. A helical transmembrane segment spans residues 134-154 (LTGFLFYLNMYASIYFLTCIS). At 155-175 (ADRFLAIVHPVKSLKLRRPLY) the chain is on the cytoplasmic side. A helical transmembrane segment spans residues 176 to 196 (AHLACAFLWVVVAVAMAPLLV). At 197 to 223 (SPQTVQTNHTVVCLQLYREKASHHALV) the chain is on the extracellular side. Residue Asn204 is glycosylated (N-linked (GlcNAc...) asparagine). Residues 224–244 (SLAVAFTFPFITTVTCYLLII) form a helical membrane-spanning segment. The Cytoplasmic segment spans residues 245 to 260 (RSLRQGLRVEKRLKTK). The helical transmembrane segment at 261-281 (AVRMIAIVLAIFLVCFVPYHV) threads the bilayer. Asn282 carries N-linked (GlcNAc...) asparagine glycosylation. The Extracellular segment spans residues 282–308 (NRSVYVLHYRSHGASCATQRILALANR). The chain crosses the membrane as a helical span at residues 309–329 (ITSCLTSLNGALDPIMYFFVA). At 330–367 (EKFRHALCNLLCGKRLKGPPPSFEGKTNESSLSAKSEL) the chain is on the cytoplasmic side.

The protein belongs to the G-protein coupled receptor 1 family. Expressed in brain, kidney, heart and umbilical vein endothelial cells. Highest level in brain.

It is found in the cell membrane. Its function is as follows. Dual specificity receptor for uracil nucleotides and cysteinyl leukotrienes (CysLTs). Signals through G(i) and inhibition of adenylyl cyclase. May mediate brain damage by nucleotides and CysLTs following ischemia. The sequence is that of Uracil nucleotide/cysteinyl leukotriene receptor (GPR17) from Homo sapiens (Human).